Consider the following 218-residue polypeptide: Putative pre-16S rRNA nuclease (218 aa).

This sequence belongs to the YqgF nuclease family.

It is found in the cytoplasm. Could be a nuclease involved in processing of the 5'-end of pre-16S rRNA. The polypeptide is Putative pre-16S rRNA nuclease (Thermotoga maritima (strain ATCC 43589 / DSM 3109 / JCM 10099 / NBRC 100826 / MSB8)).